We begin with the raw amino-acid sequence, 498 residues long: Probable malate:quinone oxidoreductase 2 (498 aa).

The protein belongs to the MQO family. The cofactor is FAD.

It catalyses the reaction (S)-malate + a quinone = a quinol + oxaloacetate. It participates in carbohydrate metabolism; tricarboxylic acid cycle; oxaloacetate from (S)-malate (quinone route): step 1/1. The protein is Probable malate:quinone oxidoreductase 2 of Staphylococcus epidermidis (strain ATCC 35984 / DSM 28319 / BCRC 17069 / CCUG 31568 / BM 3577 / RP62A).